Reading from the N-terminus, the 428-residue chain is Glutamate-1-semialdehyde 2,1-aminomutase 1 (428 aa).

K268 carries the post-translational modification N6-(pyridoxal phosphate)lysine.

It belongs to the class-III pyridoxal-phosphate-dependent aminotransferase family. HemL subfamily. Homodimer. Pyridoxal 5'-phosphate is required as a cofactor.

It localises to the cytoplasm. The enzyme catalyses (S)-4-amino-5-oxopentanoate = 5-aminolevulinate. It participates in porphyrin-containing compound metabolism; protoporphyrin-IX biosynthesis; 5-aminolevulinate from L-glutamyl-tRNA(Glu): step 2/2. This Geobacillus thermodenitrificans (strain NG80-2) protein is Glutamate-1-semialdehyde 2,1-aminomutase 1.